The sequence spans 173 residues: Atrial gland and califin peptides (173 aa).

Positions 1 to 21 (MKANTMFIILCLSLSTLCVSS) are cleaved as a signal peptide. The propeptide occupies 22 to 34 (QSTSVHGKIFVPN). I69 carries the post-translational modification Isoleucine amide. Residues 73-114 (AAGEMEQSEGQNPETKSHSWRKRSVLTPSLSSLGESLESGIS) constitute a propeptide that is removed on maturation. The segment at 75 to 94 (GEMEQSEGQNPETKSHSWRK) is disordered. A disulfide bridge connects residues C141 and C172. L152 bears the Leucine amide mark.

This sequence belongs to the molluscan ELH family. As to quaternary structure, califin A consists of a 36-residue large subunit bound by a single disulfide bond to a 18-residue small subunit.

It localises to the secreted. In terms of biological role, the atrial gland peptide A and peptide B precursors are the source of the 2 peptides that, upon release from this reproductive system gland, initiate the egg-laying process by exciting the bag cell neurons. These neurons, clustered in neural connectives near the abdominal ganglion, in turn release other peptides that act directly on the ganglion and also, via the circulating hemolymph, on many other organs to control the physiological processes of egg-laying. One of these other peptides is the egg-laying hormone. Its function is as follows. Injected in sexually mature animals califin A excites LB and LC cells of the abdominal ganglion and causes egg-laying. In Aplysia californica (California sea hare), this protein is Atrial gland and califin peptides.